The sequence spans 351 residues: Anthranilate phosphoribosyltransferase (351 aa).

5-phospho-alpha-D-ribose 1-diphosphate is bound by residues glycine 89, glycine 92–aspartate 93, threonine 97, asparagine 99–threonine 102, lysine 117–glycine 125, and serine 129. Anthranilate is bound at residue glycine 89. Serine 101 provides a ligand contact to Mg(2+). Asparagine 120 is an anthranilate binding site. Arginine 175 serves as a coordination point for anthranilate. Mg(2+) contacts are provided by aspartate 234 and glutamate 235.

This sequence belongs to the anthranilate phosphoribosyltransferase family. Homodimer. Mg(2+) serves as cofactor.

It catalyses the reaction N-(5-phospho-beta-D-ribosyl)anthranilate + diphosphate = 5-phospho-alpha-D-ribose 1-diphosphate + anthranilate. Its pathway is amino-acid biosynthesis; L-tryptophan biosynthesis; L-tryptophan from chorismate: step 2/5. Catalyzes the transfer of the phosphoribosyl group of 5-phosphorylribose-1-pyrophosphate (PRPP) to anthranilate to yield N-(5'-phosphoribosyl)-anthranilate (PRA). The polypeptide is Anthranilate phosphoribosyltransferase (Synechococcus sp. (strain CC9902)).